A 486-amino-acid polypeptide reads, in one-letter code: Secreted protein C (486 aa).

An N-terminal signal peptide occupies residues 1 to 22 (MKINIILLFVGLILAFAVLSNA). A disordered region spans residues 30 to 332 (GVNPFDNNNS…SGSHGGSSSH (303 aa)). N-linked (GlcNAc...) asparagine glycosylation is present at Asn-37. A compositionally biased stretch (gly residues) spans 41-60 (SGSGSGSGGGSSSSGSGTGQ). The span at 61-318 (SSGTVSSSGS…TGSSEYSSSS (258 aa)) shows a compositional bias: low complexity. 7 N-linked (GlcNAc...) asparagine glycosylation sites follow: Asn-73, Asn-74, Asn-83, Asn-112, Asn-129, Asn-149, and Asn-174.

Belongs to the Sct family.

Its subcellular location is the secreted. In Dictyostelium discoideum (Social amoeba), this protein is Secreted protein C.